A 100-amino-acid chain; its full sequence is NADH-quinone oxidoreductase subunit K (100 aa).

Helical transmembrane passes span 4-24 (FEYYVALSGLLMVLGFIGVII), 28-48 (IIAMLLSTELMLNAVNIAFVA), and 61-81 (FVFFILTIAAAEAAIGLGLII).

It belongs to the complex I subunit 4L family. In terms of assembly, NDH-1 is composed of 14 different subunits. Subunits NuoA, H, J, K, L, M, N constitute the membrane sector of the complex.

The protein localises to the cell inner membrane. The catalysed reaction is a quinone + NADH + 5 H(+)(in) = a quinol + NAD(+) + 4 H(+)(out). Its function is as follows. NDH-1 shuttles electrons from NADH, via FMN and iron-sulfur (Fe-S) centers, to quinones in the respiratory chain. The immediate electron acceptor for the enzyme in this species is believed to be ubiquinone. Couples the redox reaction to proton translocation (for every two electrons transferred, four hydrogen ions are translocated across the cytoplasmic membrane), and thus conserves the redox energy in a proton gradient. The protein is NADH-quinone oxidoreductase subunit K of Sulfurihydrogenibium sp. (strain YO3AOP1).